Here is a 283-residue protein sequence, read N- to C-terminus: 4-diphosphocytidyl-2-C-methyl-D-erythritol kinase (283 aa).

The active site involves K10. 99-109 (PMGGGLGGGSS) contributes to the ATP binding site. D141 is a catalytic residue.

It belongs to the GHMP kinase family. IspE subfamily. As to quaternary structure, homodimer.

It carries out the reaction 4-CDP-2-C-methyl-D-erythritol + ATP = 4-CDP-2-C-methyl-D-erythritol 2-phosphate + ADP + H(+). The protein operates within isoprenoid biosynthesis; isopentenyl diphosphate biosynthesis via DXP pathway; isopentenyl diphosphate from 1-deoxy-D-xylulose 5-phosphate: step 3/6. Its function is as follows. Catalyzes the phosphorylation of the position 2 hydroxy group of 4-diphosphocytidyl-2C-methyl-D-erythritol. The polypeptide is 4-diphosphocytidyl-2-C-methyl-D-erythritol kinase (Shigella dysenteriae serotype 1 (strain Sd197)).